Here is a 350-residue protein sequence, read N- to C-terminus: Methylthioribose-1-phosphate isomerase (350 aa).

Aspartate 241 (proton donor) is an active-site residue.

The protein belongs to the eIF-2B alpha/beta/delta subunits family. MtnA subfamily.

Its subcellular location is the cytoplasm. It localises to the nucleus. The catalysed reaction is 5-(methylsulfanyl)-alpha-D-ribose 1-phosphate = 5-(methylsulfanyl)-D-ribulose 1-phosphate. The protein operates within amino-acid biosynthesis; L-methionine biosynthesis via salvage pathway; L-methionine from S-methyl-5-thio-alpha-D-ribose 1-phosphate: step 1/6. Catalyzes the interconversion of methylthioribose-1-phosphate (MTR-1-P) into methylthioribulose-1-phosphate (MTRu-1-P). This Nematostella vectensis (Starlet sea anemone) protein is Methylthioribose-1-phosphate isomerase.